Reading from the N-terminus, the 245-residue chain is 5-oxoprolinase subunit A (245 aa).

This sequence belongs to the LamB/PxpA family. As to quaternary structure, forms a complex composed of PxpA, PxpB and PxpC.

It catalyses the reaction 5-oxo-L-proline + ATP + 2 H2O = L-glutamate + ADP + phosphate + H(+). In terms of biological role, catalyzes the cleavage of 5-oxoproline to form L-glutamate coupled to the hydrolysis of ATP to ADP and inorganic phosphate. This chain is 5-oxoprolinase subunit A, found in Haemophilus influenzae (strain 86-028NP).